A 129-amino-acid chain; its full sequence is Histone H2A-III (129 aa).

The protein belongs to the histone H2A family. As to quaternary structure, the nucleosome is a histone octamer containing two molecules each of H2A, H2B, H3 and H4 assembled in one H3-H4 heterotetramer and two H2A-H2B heterodimers. The octamer wraps approximately 147 bp of DNA.

The protein resides in the nucleus. Its subcellular location is the chromosome. In terms of biological role, core component of nucleosome. Nucleosomes wrap and compact DNA into chromatin, limiting DNA accessibility to the cellular machineries which require DNA as a template. Histones thereby play a central role in transcription regulation, DNA repair, DNA replication and chromosomal stability. DNA accessibility is regulated via a complex set of post-translational modifications of histones, also called histone code, and nucleosome remodeling. This Volvox carteri (Green alga) protein is Histone H2A-III.